Consider the following 319-residue polypeptide: Acetyl-coenzyme A carboxylase carboxyl transferase subunit alpha (319 aa).

The 255-residue stretch at 39–293 (KLEQKAAQLL…GDAIAEELKG (255 aa)) folds into the CoA carboxyltransferase C-terminal domain.

This sequence belongs to the AccA family. Acetyl-CoA carboxylase is a heterohexamer composed of biotin carboxyl carrier protein (AccB), biotin carboxylase (AccC) and two subunits each of ACCase subunit alpha (AccA) and ACCase subunit beta (AccD).

The protein localises to the cytoplasm. It carries out the reaction N(6)-carboxybiotinyl-L-lysyl-[protein] + acetyl-CoA = N(6)-biotinyl-L-lysyl-[protein] + malonyl-CoA. It functions in the pathway lipid metabolism; malonyl-CoA biosynthesis; malonyl-CoA from acetyl-CoA: step 1/1. Component of the acetyl coenzyme A carboxylase (ACC) complex. First, biotin carboxylase catalyzes the carboxylation of biotin on its carrier protein (BCCP) and then the CO(2) group is transferred by the carboxyltransferase to acetyl-CoA to form malonyl-CoA. This Parvibaculum lavamentivorans (strain DS-1 / DSM 13023 / NCIMB 13966) protein is Acetyl-coenzyme A carboxylase carboxyl transferase subunit alpha.